The primary structure comprises 671 residues: DNA ligase (671 aa).

NAD(+) contacts are provided by residues Asp-32–Asp-36, Ser-81–Leu-82, and Glu-113. Lys-115 acts as the N6-AMP-lysine intermediate in catalysis. 4 residues coordinate NAD(+): Arg-136, Glu-173, Lys-290, and Lys-314. Residues Cys-408, Cys-411, Cys-426, and Cys-432 each coordinate Zn(2+). The BRCT domain occupies Glu-593–Ser-671.

Belongs to the NAD-dependent DNA ligase family. LigA subfamily. It depends on Mg(2+) as a cofactor. Mn(2+) is required as a cofactor.

The catalysed reaction is NAD(+) + (deoxyribonucleotide)n-3'-hydroxyl + 5'-phospho-(deoxyribonucleotide)m = (deoxyribonucleotide)n+m + AMP + beta-nicotinamide D-nucleotide.. Its function is as follows. DNA ligase that catalyzes the formation of phosphodiester linkages between 5'-phosphoryl and 3'-hydroxyl groups in double-stranded DNA using NAD as a coenzyme and as the energy source for the reaction. It is essential for DNA replication and repair of damaged DNA. The polypeptide is DNA ligase (Shigella dysenteriae serotype 1 (strain Sd197)).